The chain runs to 159 residues: Putative 4-hydroxy-4-methyl-2-oxoglutarate aldolase (159 aa).

Residues 75 to 78 (GDQL) and R97 each bind substrate. D98 provides a ligand contact to a divalent metal cation.

It belongs to the class II aldolase/RraA-like family. In terms of assembly, homotrimer. The cofactor is a divalent metal cation.

The enzyme catalyses 4-hydroxy-4-methyl-2-oxoglutarate = 2 pyruvate. It carries out the reaction oxaloacetate + H(+) = pyruvate + CO2. Its function is as follows. Catalyzes the aldol cleavage of 4-hydroxy-4-methyl-2-oxoglutarate (HMG) into 2 molecules of pyruvate. Also contains a secondary oxaloacetate (OAA) decarboxylase activity due to the common pyruvate enolate transition state formed following C-C bond cleavage in the retro-aldol and decarboxylation reactions. This Laribacter hongkongensis (strain HLHK9) protein is Putative 4-hydroxy-4-methyl-2-oxoglutarate aldolase.